Here is a 66-residue protein sequence, read N- to C-terminus: Large ribosomal subunit protein bL31 (66 aa).

4 residues coordinate Zn(2+): C16, C18, C36, and C39.

This sequence belongs to the bacterial ribosomal protein bL31 family. Type A subfamily. As to quaternary structure, part of the 50S ribosomal subunit. Zn(2+) is required as a cofactor.

Functionally, binds the 23S rRNA. The sequence is that of Large ribosomal subunit protein bL31 from Desulforamulus reducens (strain ATCC BAA-1160 / DSM 100696 / MI-1) (Desulfotomaculum reducens).